Here is a 91-residue protein sequence, read N- to C-terminus: Small ribosomal subunit protein bS16 (91 aa).

Belongs to the bacterial ribosomal protein bS16 family.

The polypeptide is Small ribosomal subunit protein bS16 (Ruthia magnifica subsp. Calyptogena magnifica).